A 408-amino-acid polypeptide reads, in one-letter code: Aminoacylase-1B (408 aa).

H80 contributes to the Zn(2+) binding site. The active site involves D82. D113 is a Zn(2+) binding site. E147 functions as the Proton acceptor in the catalytic mechanism. E148, E175, and H373 together coordinate Zn(2+). Residue S408 is modified to Phosphoserine.

This sequence belongs to the peptidase M20A family. Homodimer. It depends on Zn(2+) as a cofactor. As to expression, expressed in kidney.

Its subcellular location is the cytoplasm. The enzyme catalyses an N-acyl-L-amino acid + H2O = an L-alpha-amino acid + a carboxylate. It carries out the reaction an N-acetyl-L-cysteine-S-conjugate + H2O = an S-substituted L-cysteine + acetate. Involved in the hydrolysis of N-acylated or N-acetylated amino acids (except L-aspartate). The sequence is that of Aminoacylase-1B (Acy1b) from Rattus norvegicus (Rat).